The following is a 419-amino-acid chain: MDLLAELQWRGLVNQTTDEDGLRKLLNEERVTLYCGFDPTADSLHIGNLAAILTLRRFQQAGHRPIALVGGATGLIGDPSGKKSERTLNAKETVEAWSARIKEQLGRFLDFEADGNPAKIKNNYDWIGPLDVITFLRDVGKHFSVNYMMAKESVQSRIETGISFTEFSYMMLQAYDFLRLYETEGCRLQIGGSDQWGNITAGLELIRKTKGEARAFGLTIPLVTKADGTKFGKTESGTIWLDKEKTSPYEFYQFWINTDDRDVIRYLKYFTFLSKEEIEALEQELREAPEKRAAQKALAEEVTKLVHGEEALRQAIRISEALFSGDIANLTAAEIEQGFKDVPSFVHEGGDVPLVELLVSAGISPSKRQAREDIQSGAIYVNGERLQDVGAILTAEHRLEGRFTVIRRGKKKYYLIRYA.

Y34 is an L-tyrosine binding site. The short motif at 39 to 48 is the 'HIGH' region element; it reads PTADSLHIGN. Residues Y169 and Q173 each coordinate L-tyrosine. Residues 230 to 234 carry the 'KMSKS' region motif; the sequence is KFGKT. Residue K233 participates in ATP binding. The S4 RNA-binding domain occupies 352-419; that stretch reads VPLVELLVSA…KKKYYLIRYA (68 aa).

This sequence belongs to the class-I aminoacyl-tRNA synthetase family. TyrS type 1 subfamily. As to quaternary structure, homodimer.

The protein localises to the cytoplasm. The catalysed reaction is tRNA(Tyr) + L-tyrosine + ATP = L-tyrosyl-tRNA(Tyr) + AMP + diphosphate + H(+). Its function is as follows. Catalyzes the attachment of tyrosine to tRNA(Tyr) in a two-step reaction: tyrosine is first activated by ATP to form Tyr-AMP and then transferred to the acceptor end of tRNA(Tyr). The polypeptide is Tyrosine--tRNA ligase (Geobacillus kaustophilus (strain HTA426)).